Consider the following 65-residue polypeptide: Large ribosomal subunit protein bL33c (65 aa).

The protein belongs to the bacterial ribosomal protein bL33 family.

The protein localises to the plastid. The protein resides in the chloroplast. The polypeptide is Large ribosomal subunit protein bL33c (Pyropia yezoensis (Susabi-nori)).